A 307-amino-acid polypeptide reads, in one-letter code: Bidirectional sugar transporter SWEET11 (307 aa).

Residues 1–14 (MAGGFLSMANPAVT) lie on the Extracellular side of the membrane. The chain crosses the membrane as a helical span at residues 15-35 (LSGVAGNIISFLVFLAPVATF). The 84-residue stretch at 17-100 (GVAGNIISFL…VLYLVYAPRR (84 aa)) folds into the MtN3/slv 1 domain. At 36 to 47 (LQVYKKKSTGGY) the chain is on the cytoplasmic side. A helical membrane pass occupies residues 48–68 (SSVPYVVALFSSVLWIFYALV). Over 69-74 (KTNSRP) the chain is Extracellular. A helical transmembrane segment spans residues 75 to 95 (LLTINAFGCGVEAAYIVLYLV). The Cytoplasmic portion of the chain corresponds to 96–107 (YAPRRARLRTLA). A helical membrane pass occupies residues 108–128 (FFLLLDVAAFALIVVTTLYLV). At 129 to 135 (PKPHQVK) the chain is on the extracellular side. A helical transmembrane segment spans residues 136 to 156 (FLGSVCLAFSMAVFVAPLSII). In terms of domain architecture, MtN3/slv 2 spans 136 to 219 (FLGSVCLAFS…MGLYFWYRKP (84 aa)). The Cytoplasmic segment spans residues 157–168 (FKVIKTKSVEFM). Residues 169–189 (PIGLSVCLTLSAVAWFCYGLF) form a helical membrane-spanning segment. The Extracellular segment spans residues 190–194 (TKDPY). Residues 195–215 (VMYPNVGGFFFSCVQMGLYFW) traverse the membrane as a helical segment. Over 216 to 307 (YRKPRNTAVL…PEVIEITAAV (92 aa)) the chain is Cytoplasmic.

The protein belongs to the SWEET sugar transporter family. In terms of assembly, interacts with COPT1 and COPT2. Interacts with APX8. Mostly expressed in panicles and anthers. Also detected in leaves (leaf collar, leaf auricle, leaf ligule), roots, sheaths, culms and culm nodes.

The protein resides in the cell membrane. In terms of biological role, mediates both low-affinity uptake and efflux of sugar across the plasma membrane. Required for pollen viability. Involved in the transport of copper, in cooperation with COPT1 and COPT2. Functionally, confers sensitivity to bacterial blight mediated by X.oryzae pv. oryzae (Xoo) in its Xa13 allelic form (e.g. cv. IR24), probably by providing the sugar required for the pathogen growth, or by reducing copper contents in xylem. However, a recessive resistance can be associated with the xa13 allele (in which the promoter is mutated leading to reduced induction upon pathogen infection, e.g. cv. IRBB13), specifically toward Xoo Philippine race 6 and Indian race PXO8. The polypeptide is Bidirectional sugar transporter SWEET11 (SWEET11) (Oryza sativa subsp. japonica (Rice)).